The sequence spans 427 residues: L-threonine dehydratase biosynthetic IlvA (427 aa).

The residue at position 63 (lysine 63) is an N6-(pyridoxal phosphate)lysine. Residues asparagine 90, 193-197 (GGGGC), and serine 319 contribute to the pyridoxal 5'-phosphate site. The ACT-like domain occupies 343 to 417 (HYFLVDFPQK…TEMHVETLQP (75 aa)).

This sequence belongs to the serine/threonine dehydratase family. As to quaternary structure, homotetramer. Requires pyridoxal 5'-phosphate as cofactor.

It carries out the reaction L-threonine = 2-oxobutanoate + NH4(+). It participates in amino-acid biosynthesis; L-isoleucine biosynthesis; 2-oxobutanoate from L-threonine: step 1/1. Functionally, catalyzes the anaerobic formation of alpha-ketobutyrate and ammonia from threonine in a two-step reaction. The first step involved a dehydration of threonine and a production of enamine intermediates (aminocrotonate), which tautomerizes to its imine form (iminobutyrate). Both intermediates are unstable and short-lived. The second step is the nonenzymatic hydrolysis of the enamine/imine intermediates to form 2-ketobutyrate and free ammonia. In the low water environment of the cell, the second step is accelerated by RidA. The protein is L-threonine dehydratase biosynthetic IlvA (ilvA) of Mycobacterium leprae (strain TN).